The following is a 172-amino-acid chain: Adenine phosphoribosyltransferase (172 aa).

Belongs to the purine/pyrimidine phosphoribosyltransferase family. As to quaternary structure, homodimer.

The protein resides in the cytoplasm. It carries out the reaction AMP + diphosphate = 5-phospho-alpha-D-ribose 1-diphosphate + adenine. The protein operates within purine metabolism; AMP biosynthesis via salvage pathway; AMP from adenine: step 1/1. Catalyzes a salvage reaction resulting in the formation of AMP, that is energically less costly than de novo synthesis. In Pediococcus pentosaceus (strain ATCC 25745 / CCUG 21536 / LMG 10740 / 183-1w), this protein is Adenine phosphoribosyltransferase.